We begin with the raw amino-acid sequence, 144 residues long: Transcriptional regulator MraZ (144 aa).

SpoVT-AbrB domains lie at 5–47 (TYTP…PRAE) and 77–120 (TDEQ…DAQA).

This sequence belongs to the MraZ family. Forms oligomers.

Its subcellular location is the cytoplasm. The protein localises to the nucleoid. The polypeptide is Transcriptional regulator MraZ (Mycolicibacterium gilvum (strain PYR-GCK) (Mycobacterium gilvum (strain PYR-GCK))).